We begin with the raw amino-acid sequence, 322 residues long: Ribosomal RNA small subunit methyltransferase H (322 aa).

S-adenosyl-L-methionine contacts are provided by residues 43 to 45, D60, F86, D104, and Q111; that span reads GGY.

It belongs to the methyltransferase superfamily. RsmH family.

The protein localises to the cytoplasm. The catalysed reaction is cytidine(1402) in 16S rRNA + S-adenosyl-L-methionine = N(4)-methylcytidine(1402) in 16S rRNA + S-adenosyl-L-homocysteine + H(+). Its function is as follows. Specifically methylates the N4 position of cytidine in position 1402 (C1402) of 16S rRNA. The protein is Ribosomal RNA small subunit methyltransferase H of Caulobacter sp. (strain K31).